A 1080-amino-acid chain; its full sequence is DNA-directed RNA polymerase subunit beta (1080 aa).

It belongs to the RNA polymerase beta chain family. In terms of assembly, in plastids the minimal PEP RNA polymerase catalytic core is composed of four subunits: alpha, beta, beta', and beta''. When a (nuclear-encoded) sigma factor is associated with the core the holoenzyme is formed, which can initiate transcription.

It is found in the plastid. Its subcellular location is the chloroplast. It catalyses the reaction RNA(n) + a ribonucleoside 5'-triphosphate = RNA(n+1) + diphosphate. In terms of biological role, DNA-dependent RNA polymerase catalyzes the transcription of DNA into RNA using the four ribonucleoside triphosphates as substrates. The sequence is that of DNA-directed RNA polymerase subunit beta from Mesostigma viride (Green alga).